Here is a 116-residue protein sequence, read N- to C-terminus: Fluoride-specific ion channel FluC 2 (116 aa).

2 consecutive transmembrane segments (helical) span residues 3 to 23 (LLTA…RYAV) and 43 to 63 (LLFG…AVTV). Positions 67 and 70 each coordinate Na(+). The helical transmembrane segment at 96–116 (VGTLAAALLAVFLGIALGAAL) threads the bilayer.

This sequence belongs to the fluoride channel Fluc/FEX (TC 1.A.43) family.

Its subcellular location is the cell membrane. The catalysed reaction is fluoride(in) = fluoride(out). Na(+) is not transported, but it plays an essential structural role and its presence is essential for fluoride channel function. In terms of biological role, fluoride-specific ion channel. Important for reducing fluoride concentration in the cell, thus reducing its toxicity. The protein is Fluoride-specific ion channel FluC 2 of Natronomonas pharaonis (strain ATCC 35678 / DSM 2160 / CIP 103997 / JCM 8858 / NBRC 14720 / NCIMB 2260 / Gabara) (Halobacterium pharaonis).